A 276-amino-acid polypeptide reads, in one-letter code: Phospholipid phosphatase 2 (276 aa).

Residues 1–4 (MERR) are Cytoplasmic-facing. Residues 5 to 25 (WVFVLLDVLCVLVASLPFIIL) form a helical membrane-spanning segment. Topologically, residues 26–51 (TLVNAPYKRGFYCGDDSIRYPYRPDT) are lumenal. A helical transmembrane segment spans residues 52–72 (ITHGLMAGVIITATVILVSLG). Over 73-87 (EAYLVYTDRLYSRSN) the chain is Cytoplasmic. Residues 88 to 108 (FNNYVAAIYKVLGTFLFGAAV) traverse the membrane as a helical segment. The Lumenal segment spans residues 109 to 161 (SQSLTDLAKYMIGRLRPSFLAVCDPDWSQVNCSGYVQLEVCRGSPANVTEARL). The phosphatase sequence motif I stretch occupies residues 117–125 (KYMIGRLRP). Asn139 and Asn155 each carry an N-linked (GlcNAc...) asparagine glycan. The helical transmembrane segment at 162 to 182 (SFYSGHSSFGMYCMLFLALYV) threads the bilayer. The tract at residues 164–167 (YSGH) is phosphatase sequence motif II. His167 serves as the catalytic Proton donors. Residues 183–189 (QARLCWK) are Cytoplasmic-facing. Residues 190-210 (WARLLRPTVQFFLVAFAIYVG) form a helical membrane-spanning segment. At 211–218 (YTRVSDHK) the chain is on the lumenal side. Residues 212–223 (TRVSDHKHHWSD) form a phosphatase sequence motif III region. His219 serves as the catalytic Nucleophile. A helical transmembrane segment spans residues 219–239 (HHWSDVLVGLLQGALVACLTV). Residues 240 to 276 (RYVSDFFKSRPPQPCQEDEVPERKPSLSLTLTLGDRP) lie on the Cytoplasmic side of the membrane. A disordered region spans residues 251-276 (PQPCQEDEVPERKPSLSLTLTLGDRP).

It belongs to the PA-phosphatase related phosphoesterase family. As to quaternary structure, forms functional homodimers and homooligomers. Can also form heterooligomers with PLPP1 and PLPP3. N-glycosylated. As to expression, expressed at high levels in lung, liver and kidney; at low levels in heart and brain, and was not detected in skeletal muscle.

The protein resides in the membrane. The protein localises to the cell membrane. Its subcellular location is the early endosome membrane. It localises to the endoplasmic reticulum membrane. It catalyses the reaction a 1,2-diacyl-sn-glycero-3-phosphate + H2O = a 1,2-diacyl-sn-glycerol + phosphate. It carries out the reaction 1,2-dihexadecanoyl-sn-glycero-3-phosphate + H2O = 1,2-dihexadecanoyl-sn-glycerol + phosphate. The catalysed reaction is 1,2-di-(9Z-octadecenoyl)-sn-glycero-3-phosphate + H2O = 1,2-di-(9Z-octadecenoyl)-sn-glycerol + phosphate. The enzyme catalyses a monoacyl-sn-glycero-3-phosphate + H2O = a monoacylglycerol + phosphate. It catalyses the reaction (9Z)-octadecenoyl-sn-glycero-3-phosphate + H2O = (9Z-octadecenoyl)-glycerol + phosphate. It carries out the reaction sphing-4-enine 1-phosphate + H2O = sphing-4-enine + phosphate. The catalysed reaction is an N-acylsphing-4-enine 1-phosphate + H2O = an N-acylsphing-4-enine + phosphate. The enzyme catalyses N-(octanoyl)-sphing-4-enine-1-phosphate + H2O = N-octanoylsphing-4-enine + phosphate. It catalyses the reaction N-(9Z-octadecenoyl)-ethanolamine phosphate + H2O = N-(9Z-octadecenoyl) ethanolamine + phosphate. The protein operates within lipid metabolism; phospholipid metabolism. Its activity is regulated as follows. Magnesium-independent phospholipid phosphatase. Insensitive to N-ethylmaleimide. In terms of biological role, magnesium-independent phospholipid phosphatase that catalyzes the dephosphorylation of a variety of glycerolipid and sphingolipid phosphate esters including phosphatidate/PA, lysophosphatidate/LPA, sphingosine 1-phosphate/S1P and ceramide 1-phosphate/C1P. Has no apparent extracellular phosphatase activity and therefore most probably acts intracellularly. Also acts on N-oleoyl ethanolamine phosphate/N-(9Z-octadecenoyl)-ethanolamine phosphate, a potential physiological compound. Through dephosphorylation of these bioactive lipid mediators produces new bioactive compounds and may regulate signal transduction in different cellular processes. Indirectly regulates, for instance, cell cycle G1/S phase transition through its phospholipid phosphatase activity. This Mus musculus (Mouse) protein is Phospholipid phosphatase 2.